The chain runs to 252 residues: MTEGARSTIDQGEVDRFSAMAAEWWSPTGKFRPLHKFNPVRLTYIRDKACENFGRDPKSARPLEGLRVLDIGCGGGLLSEPVARMGATVTGADPSEKNIGIASTHAKASGVSVDYRAVTAEELADAGETFDIVLNMEVVEHVADVEFFMTTCAKMVRPGGLIFVATINRTMKAAALAIFAAENILRWLPRGTHQYEKLVRPEELEKPLTASGLEITDRTGVFFNPLSNQWNLSKDMDVNYMLLAKRSAQLDR.

S-adenosyl-L-methionine-binding residues include arginine 41, glycine 72, aspartate 93, and methionine 136.

The protein belongs to the methyltransferase superfamily. UbiG/COQ3 family.

The catalysed reaction is a 3-demethylubiquinol + S-adenosyl-L-methionine = a ubiquinol + S-adenosyl-L-homocysteine + H(+). It carries out the reaction a 3-(all-trans-polyprenyl)benzene-1,2-diol + S-adenosyl-L-methionine = a 2-methoxy-6-(all-trans-polyprenyl)phenol + S-adenosyl-L-homocysteine + H(+). The protein operates within cofactor biosynthesis; ubiquinone biosynthesis. O-methyltransferase that catalyzes the 2 O-methylation steps in the ubiquinone biosynthetic pathway. The chain is Ubiquinone biosynthesis O-methyltransferase from Rhizobium leguminosarum bv. trifolii (strain WSM2304).